Here is a 149-residue protein sequence, read N- to C-terminus: Arginine repressor (149 aa).

Belongs to the ArgR family.

Its subcellular location is the cytoplasm. It functions in the pathway amino-acid biosynthesis; L-arginine biosynthesis [regulation]. Regulates arginine biosynthesis genes. The polypeptide is Arginine repressor (Listeria monocytogenes serotype 4b (strain F2365)).